Reading from the N-terminus, the 287-residue chain is Elongation factor Ts (287 aa).

Positions 80 to 83 (TDFL) are involved in Mg(2+) ion dislocation from EF-Tu.

It belongs to the EF-Ts family.

Its subcellular location is the cytoplasm. Its function is as follows. Associates with the EF-Tu.GDP complex and induces the exchange of GDP to GTP. It remains bound to the aminoacyl-tRNA.EF-Tu.GTP complex up to the GTP hydrolysis stage on the ribosome. This is Elongation factor Ts from Pseudomonas syringae pv. syringae (strain B728a).